Here is a 283-residue protein sequence, read N- to C-terminus: Diaminopimelate epimerase (283 aa).

The substrate site is built by N13 and N65. The active-site Proton donor is the C74. Residues 75–76, N196, and 214–215 contribute to the substrate site; these read GN and ER. C223 serves as the catalytic Proton acceptor. 224 to 225 contacts substrate; sequence GT.

This sequence belongs to the diaminopimelate epimerase family. As to quaternary structure, homodimer.

It is found in the cytoplasm. The catalysed reaction is (2S,6S)-2,6-diaminopimelate = meso-2,6-diaminopimelate. The protein operates within amino-acid biosynthesis; L-lysine biosynthesis via DAP pathway; DL-2,6-diaminopimelate from LL-2,6-diaminopimelate: step 1/1. Its function is as follows. Catalyzes the stereoinversion of LL-2,6-diaminopimelate (L,L-DAP) to meso-diaminopimelate (meso-DAP), a precursor of L-lysine and an essential component of the bacterial peptidoglycan. The polypeptide is Diaminopimelate epimerase (Alkaliphilus metalliredigens (strain QYMF)).